Consider the following 600-residue polypeptide: Aspartate--tRNA(Asp/Asn) ligase (600 aa).

Position 187 (Glu187) interacts with L-aspartate. The aspartate stretch occupies residues 211 to 214; the sequence is QIFK. Residues Arg233 and His463 each coordinate L-aspartate. 233–235 is a binding site for ATP; it reads RDE. Glu497 is an ATP binding site. Arg504 lines the L-aspartate pocket. Residue 549 to 552 coordinates ATP; the sequence is GVDR.

This sequence belongs to the class-II aminoacyl-tRNA synthetase family. Type 1 subfamily. In terms of assembly, homodimer.

The protein localises to the cytoplasm. It carries out the reaction tRNA(Asx) + L-aspartate + ATP = L-aspartyl-tRNA(Asx) + AMP + diphosphate. Functionally, aspartyl-tRNA synthetase with relaxed tRNA specificity since it is able to aspartylate not only its cognate tRNA(Asp) but also tRNA(Asn). Reaction proceeds in two steps: L-aspartate is first activated by ATP to form Asp-AMP and then transferred to the acceptor end of tRNA(Asp/Asn). This is Aspartate--tRNA(Asp/Asn) ligase from Wolbachia pipientis subsp. Culex pipiens (strain wPip).